The sequence spans 270 residues: tRNA pseudouridine synthase A (270 aa).

Residue Asp51 is the Nucleophile of the active site. Tyr109 contacts substrate.

The protein belongs to the tRNA pseudouridine synthase TruA family. Homodimer.

It carries out the reaction uridine(38/39/40) in tRNA = pseudouridine(38/39/40) in tRNA. Functionally, formation of pseudouridine at positions 38, 39 and 40 in the anticodon stem and loop of transfer RNAs. The sequence is that of tRNA pseudouridine synthase A from Variovorax paradoxus (strain S110).